We begin with the raw amino-acid sequence, 371 residues long: Putative glutamate--cysteine ligase 2 (371 aa).

Belongs to the glutamate--cysteine ligase type 2 family. YbdK subfamily.

The enzyme catalyses L-cysteine + L-glutamate + ATP = gamma-L-glutamyl-L-cysteine + ADP + phosphate + H(+). In terms of biological role, ATP-dependent carboxylate-amine ligase which exhibits weak glutamate--cysteine ligase activity. The protein is Putative glutamate--cysteine ligase 2 of Burkholderia ambifaria (strain MC40-6).